A 253-amino-acid chain; its full sequence is Triosephosphate isomerase (253 aa).

9–11 is a binding site for substrate; it reads NWK. H98 serves as the catalytic Electrophile. Residue E170 is the Proton acceptor of the active site. Substrate is bound by residues G176, S216, and 237–238; that span reads GG.

It belongs to the triosephosphate isomerase family. In terms of assembly, homodimer.

Its subcellular location is the cytoplasm. It catalyses the reaction D-glyceraldehyde 3-phosphate = dihydroxyacetone phosphate. Its pathway is carbohydrate biosynthesis; gluconeogenesis. The protein operates within carbohydrate degradation; glycolysis; D-glyceraldehyde 3-phosphate from glycerone phosphate: step 1/1. In terms of biological role, involved in the gluconeogenesis. Catalyzes stereospecifically the conversion of dihydroxyacetone phosphate (DHAP) to D-glyceraldehyde-3-phosphate (G3P). This chain is Triosephosphate isomerase, found in Amoebophilus asiaticus (strain 5a2).